The sequence spans 357 residues: Tetraacyldisaccharide 4'-kinase (357 aa).

54–61 (TVGGAGKT) lines the ATP pocket.

Belongs to the LpxK family.

It catalyses the reaction a lipid A disaccharide + ATP = a lipid IVA + ADP + H(+). The protein operates within glycolipid biosynthesis; lipid IV(A) biosynthesis; lipid IV(A) from (3R)-3-hydroxytetradecanoyl-[acyl-carrier-protein] and UDP-N-acetyl-alpha-D-glucosamine: step 6/6. Its function is as follows. Transfers the gamma-phosphate of ATP to the 4'-position of a tetraacyldisaccharide 1-phosphate intermediate (termed DS-1-P) to form tetraacyldisaccharide 1,4'-bis-phosphate (lipid IVA). The protein is Tetraacyldisaccharide 4'-kinase of Rhizobium leguminosarum bv. trifolii (strain WSM2304).